Reading from the N-terminus, the 88-residue chain is Parvalbumin beta 3 (88 aa).

Position 1 is an N-acetylalanine (alanine 1). In terms of domain architecture, EF-hand spans 31–66 (KSPEEVKKFFAIIDQDHSGFIEEEELKLFLQTFSAG). 7 residues coordinate Ca(2+): aspartate 44, aspartate 46, serine 48, phenylalanine 50, glutamate 52, glutamate 55, and glutamate 81.

It belongs to the parvalbumin family.

Functionally, in muscle, parvalbumin is thought to be involved in relaxation after contraction. It binds two calcium ions. This chain is Parvalbumin beta 3, found in Merluccius productus (North Pacific hake).